Consider the following 361-residue polypeptide: Phosphoserine aminotransferase (361 aa).

The L-glutamate site is built by S9 and R42. Pyridoxal 5'-phosphate-binding positions include 76-77 (AR), W102, T153, D173, and Q196. The residue at position 197 (K197) is an N6-(pyridoxal phosphate)lysine. 238–239 (NT) contributes to the pyridoxal 5'-phosphate binding site.

This sequence belongs to the class-V pyridoxal-phosphate-dependent aminotransferase family. SerC subfamily. In terms of assembly, homodimer. The cofactor is pyridoxal 5'-phosphate.

The protein resides in the cytoplasm. The enzyme catalyses O-phospho-L-serine + 2-oxoglutarate = 3-phosphooxypyruvate + L-glutamate. It catalyses the reaction 4-(phosphooxy)-L-threonine + 2-oxoglutarate = (R)-3-hydroxy-2-oxo-4-phosphooxybutanoate + L-glutamate. It functions in the pathway amino-acid biosynthesis; L-serine biosynthesis; L-serine from 3-phospho-D-glycerate: step 2/3. The protein operates within cofactor biosynthesis; pyridoxine 5'-phosphate biosynthesis; pyridoxine 5'-phosphate from D-erythrose 4-phosphate: step 3/5. Functionally, catalyzes the reversible conversion of 3-phosphohydroxypyruvate to phosphoserine and of 3-hydroxy-2-oxo-4-phosphonooxybutanoate to phosphohydroxythreonine. This is Phosphoserine aminotransferase from Sodalis glossinidius (strain morsitans).